The chain runs to 272 residues: 4-hydroxy-tetrahydrodipicolinate reductase (272 aa).

Residues 11 to 16 (GAGGRM) and Glu-37 each bind NAD(+). Position 38 (Arg-38) interacts with NADP(+). Residues 101–103 (GTT) and 125–128 (AANF) each bind NAD(+). Catalysis depends on His-158, which acts as the Proton donor/acceptor. Residue His-159 participates in (S)-2,3,4,5-tetrahydrodipicolinate binding. Lys-162 acts as the Proton donor in catalysis. 168 to 169 (GT) contacts (S)-2,3,4,5-tetrahydrodipicolinate.

This sequence belongs to the DapB family. Homotetramer.

It is found in the cytoplasm. The enzyme catalyses (S)-2,3,4,5-tetrahydrodipicolinate + NAD(+) + H2O = (2S,4S)-4-hydroxy-2,3,4,5-tetrahydrodipicolinate + NADH + H(+). It carries out the reaction (S)-2,3,4,5-tetrahydrodipicolinate + NADP(+) + H2O = (2S,4S)-4-hydroxy-2,3,4,5-tetrahydrodipicolinate + NADPH + H(+). It participates in amino-acid biosynthesis; L-lysine biosynthesis via DAP pathway; (S)-tetrahydrodipicolinate from L-aspartate: step 4/4. Its function is as follows. Catalyzes the conversion of 4-hydroxy-tetrahydrodipicolinate (HTPA) to tetrahydrodipicolinate. The polypeptide is 4-hydroxy-tetrahydrodipicolinate reductase (Edwardsiella ictaluri (strain 93-146)).